Here is a 100-residue protein sequence, read N- to C-terminus: Ubiquitin-related modifier 1 homolog (100 aa).

Gly100 carries the 1-thioglycine modification. Gly100 participates in a covalent cross-link: Glycyl lysine isopeptide (Gly-Lys) (interchain with K-? in acceptor proteins).

The protein belongs to the URM1 family. Post-translationally, C-terminal thiocarboxylation occurs in 2 steps, it is first acyl-adenylated (-COAMP) via the hesA/moeB/thiF part of the MOCS3 homolog, then thiocarboxylated (-COSH) via the rhodanese domain of the MOCS3 homolog.

Its subcellular location is the cytoplasm. The protein operates within tRNA modification; 5-methoxycarbonylmethyl-2-thiouridine-tRNA biosynthesis. Acts as a sulfur carrier required for 2-thiolation of mcm(5)S(2)U at tRNA wobble positions of cytosolic tRNA(Lys), tRNA(Glu) and tRNA(Gln). Serves as sulfur donor in tRNA 2-thiolation reaction by being thiocarboxylated (-COSH) at its C-terminus by MOCS3. The sulfur is then transferred to tRNA to form 2-thiolation of mcm(5)S(2)U. Also acts as a ubiquitin-like protein (UBL) that is covalently conjugated via an isopeptide bond to lysine residues of target proteins. The thiocarboxylated form serves as substrate for conjugation and oxidative stress specifically induces the formation of UBL-protein conjugates. The sequence is that of Ubiquitin-related modifier 1 homolog from Oryza sativa subsp. japonica (Rice).